The following is a 251-amino-acid chain: Imidazole glycerol phosphate synthase subunit HisF (251 aa).

Catalysis depends on residues D11 and D130.

This sequence belongs to the HisA/HisF family. Heterodimer of HisH and HisF.

The protein localises to the cytoplasm. It catalyses the reaction 5-[(5-phospho-1-deoxy-D-ribulos-1-ylimino)methylamino]-1-(5-phospho-beta-D-ribosyl)imidazole-4-carboxamide + L-glutamine = D-erythro-1-(imidazol-4-yl)glycerol 3-phosphate + 5-amino-1-(5-phospho-beta-D-ribosyl)imidazole-4-carboxamide + L-glutamate + H(+). Its pathway is amino-acid biosynthesis; L-histidine biosynthesis; L-histidine from 5-phospho-alpha-D-ribose 1-diphosphate: step 5/9. Its function is as follows. IGPS catalyzes the conversion of PRFAR and glutamine to IGP, AICAR and glutamate. The HisF subunit catalyzes the cyclization activity that produces IGP and AICAR from PRFAR using the ammonia provided by the HisH subunit. This Chlorobium luteolum (strain DSM 273 / BCRC 81028 / 2530) (Pelodictyon luteolum) protein is Imidazole glycerol phosphate synthase subunit HisF.